The primary structure comprises 408 residues: MKRAFLIVLDSFGIGATKDAHRFGDVGANTFGNIAKFCFLNKANNYGRKGLLYIPHLLSLGLAKVAIASSGQDLLGIQDTNNVIGSYAYSNEISSGKDTSSGHWEIAGAPVLFDWDYFSSSLNSVPKYLIQDIVDQCNLSGFLGNCHASGTDILDRFGEIHISTKKPILYTSIDSVCQIACHESIFGLKRLYNLCRSIRKIFDKRKINIARIIARPFTGFKKEHFRRTGNRRDFSMEPHKITVMEKLIGEKKGRVIAIGKISDIYAGKGISCSMYATGLVNLFNTTIQEIKNAKNNTIVFVNFVDFDSLWGHRRDVSGYAKDLEWFDYNLPKLLKLVHNEDLLIITADHGCDPTWIGTDHTRENVPILIYQRSMESKNFGYRETFSDIGQTLAKYFNLSTMSYGTSIF.

Residues Asp10, Asp307, His312, Asp348, His349, and His360 each coordinate Mn(2+).

It belongs to the phosphopentomutase family. Mn(2+) is required as a cofactor.

The protein localises to the cytoplasm. The catalysed reaction is 2-deoxy-alpha-D-ribose 1-phosphate = 2-deoxy-D-ribose 5-phosphate. It carries out the reaction alpha-D-ribose 1-phosphate = D-ribose 5-phosphate. It participates in carbohydrate degradation; 2-deoxy-D-ribose 1-phosphate degradation; D-glyceraldehyde 3-phosphate and acetaldehyde from 2-deoxy-alpha-D-ribose 1-phosphate: step 1/2. In terms of biological role, isomerase that catalyzes the conversion of deoxy-ribose 1-phosphate (dRib-1-P) and ribose 1-phosphate (Rib-1-P) to deoxy-ribose 5-phosphate (dRib-5-P) and ribose 5-phosphate (Rib-5-P), respectively. The sequence is that of Phosphopentomutase from Buchnera aphidicola subsp. Baizongia pistaciae (strain Bp).